Consider the following 180-residue polypeptide: CASP-like protein 2D1 (180 aa).

At 1-7 the chain is on the cytoplasmic side; it reads MAASGLK. A helical transmembrane segment spans residues 8–28; sequence VPEMALRVCVVPLALASLWEM. Residues 29–48 lie on the Extracellular side of the membrane; the sequence is ATNAQADDTYGEVKFSDLSG. A helical transmembrane segment spans residues 49–69; it reads FSYLVGVNAVTAAYALVSILL. The Cytoplasmic portion of the chain corresponds to 70 to 79; the sequence is SSLKPLARYD. The helical transmembrane segment at 80 to 100 threads the bilayer; sequence WVILVMDQASAYLLVTSASAA. Topologically, residues 101–129 are extracellular; it reads AELLQLARRGDREVSWGEVCSYFGRFCGK. Residues 130-150 traverse the membrane as a helical segment; sequence ATVSLALHAAALACFVALALV. The Cytoplasmic portion of the chain corresponds to 151–180; sequence SAFRVLSTTGSSCHPPKHAQAQEHEQGRYN. The segment at 161–180 is disordered; the sequence is SSCHPPKHAQAQEHEQGRYN. Positions 170 to 180 are enriched in basic and acidic residues; sequence QAQEHEQGRYN.

The protein belongs to the Casparian strip membrane proteins (CASP) family. In terms of assembly, homodimer and heterodimers.

It localises to the cell membrane. The polypeptide is CASP-like protein 2D1 (Sorghum bicolor (Sorghum)).